A 302-amino-acid chain; its full sequence is Glutaminase (302 aa).

Substrate contacts are provided by S61, N111, E155, N162, Y186, Y238, and V256.

It belongs to the glutaminase family. As to quaternary structure, homotetramer.

It catalyses the reaction L-glutamine + H2O = L-glutamate + NH4(+). This is Glutaminase from Pseudomonas syringae pv. tomato (strain ATCC BAA-871 / DC3000).